Here is a 315-residue protein sequence, read N- to C-terminus: Voltage-dependent calcium channel gamma-3 subunit (315 aa).

Transmembrane regions (helical) follow at residues 8 to 28 (IQML…TIAV), 104 to 124 (SSVF…CVAA), 135 to 155 (ILSA…GIIV), and 181 to 201 (FGAF…HIYI). A disordered region spans residues 232–253 (RRRSSSRSTEPRSRDLSPISKG). Ser-248 bears the Phosphoserine mark.

The protein belongs to the PMP-22/EMP/MP20 family. CACNG subfamily. As to quaternary structure, the L-type calcium channel is composed of five subunits: alpha-1, alpha-2/delta, beta and gamma. Acts as an auxiliary subunit for AMPA-selective glutamate receptors (AMPARs). Found in a complex with GRIA1, GRIA2, GRIA3, GRIA4, CNIH2, CNIH3, CACNG2, CACNG4, CACNG5, CACNG7 and CACNG8. Interacts with AP4M1 and GRIA1; associates GRIA1 with the adaptor protein complex 4 (AP-4) to target GRIA1 to the somatodendritic compartment of neurons.

Its subcellular location is the membrane. Regulates the trafficking to the somatodendritic compartment and gating properties of AMPA-selective glutamate receptors (AMPARs). Promotes their targeting to the cell membrane and synapses and modulates their gating properties by slowing their rates of activation, deactivation and desensitization. Does not show subunit-specific AMPA receptor regulation and regulates all AMPAR subunits. Thought to stabilize the calcium channel in an inactivated (closed) state. The chain is Voltage-dependent calcium channel gamma-3 subunit (Cacng3) from Mus musculus (Mouse).